Here is a 352-residue protein sequence, read N- to C-terminus: Anthranilate phosphoribosyltransferase (352 aa).

5-phospho-alpha-D-ribose 1-diphosphate is bound by residues Gly94, 97–98, Ser102, 104–107, 122–130, and Ser134; these read GS, NIST, and KHGNRAVSS. Position 94 (Gly94) interacts with anthranilate. Ser106 is a Mg(2+) binding site. An anthranilate-binding site is contributed by Asn125. Residue Arg180 participates in anthranilate binding. Mg(2+) is bound by residues Asp239 and Glu240.

The protein belongs to the anthranilate phosphoribosyltransferase family. As to quaternary structure, homodimer. Mg(2+) serves as cofactor.

The enzyme catalyses N-(5-phospho-beta-D-ribosyl)anthranilate + diphosphate = 5-phospho-alpha-D-ribose 1-diphosphate + anthranilate. It participates in amino-acid biosynthesis; L-tryptophan biosynthesis; L-tryptophan from chorismate: step 2/5. Its function is as follows. Catalyzes the transfer of the phosphoribosyl group of 5-phosphorylribose-1-pyrophosphate (PRPP) to anthranilate to yield N-(5'-phosphoribosyl)-anthranilate (PRA). This chain is Anthranilate phosphoribosyltransferase, found in Citrifermentans bemidjiense (strain ATCC BAA-1014 / DSM 16622 / JCM 12645 / Bem) (Geobacter bemidjiensis).